The sequence spans 120 residues: Ribonuclease P protein component 2 (120 aa).

The protein belongs to the eukaryotic/archaeal RNase P protein component 2 family. As to quaternary structure, consists of a catalytic RNA component and at least 4-5 protein subunits.

It is found in the cytoplasm. It catalyses the reaction Endonucleolytic cleavage of RNA, removing 5'-extranucleotides from tRNA precursor.. Part of ribonuclease P, a protein complex that generates mature tRNA molecules by cleaving their 5'-ends. In Thermococcus kodakarensis (strain ATCC BAA-918 / JCM 12380 / KOD1) (Pyrococcus kodakaraensis (strain KOD1)), this protein is Ribonuclease P protein component 2.